The chain runs to 180 residues: Progesterone receptor (180 aa).

Residues 1 to 11 (KNCPACRLRKC) form an NR C4-type zinc finger. The nuclear receptor DNA-binding region spans 1–16 (KNCPACRLRKCCQAGM). A Phosphoserine modification is found at Ser-60. The NR LBD domain occupies 63–180 (QEIQLFPPLI…QRMKESSFYS (118 aa)). The segment at 71 to 180 (LINLLLSIEP…QRMKESSFYS (110 aa)) is AF2; mediates transcriptional activation. Position 150 (Arg-150) interacts with progesterone.

It belongs to the nuclear hormone receptor family. NR3 subfamily. As to quaternary structure, interacts with SMARD1 and UNC45A. Interacts with CUEDC2; the interaction promotes ubiquitination, decreases sumoylation, and represses transcriptional activity. Interacts with PIAS3; the interaction promotes sumoylation of PR in a hormone-dependent manner, inhibits DNA-binding, and alters nuclear export. Interacts with SP1; the interaction requires ligand-induced phosphorylation by ERK1/2-MAPK. Interacts with PRMT2. Interacts with NCOA2 and NCOA1. Interacts with KLF9. Interacts with GTF2B. Post-translationally, phosphorylated on multiple serine sites. Several of these sites are hormone-dependent. In terms of processing, sumoylation is hormone-dependent and represses transcriptional activity. Sumoylation on all three sites is enhanced by PIAS3. Desumoylated by SENP1. Sumoylation is repressed by ubiquitination and modulated by phosphorylation. Ubiquitination is hormone-dependent and represses sumoylation. Post-translationally, palmitoylated by ZDHHC7 and ZDHHC21. Palmitoylation is required for plasma membrane targeting and for rapid intracellular signaling via ERK and AKT kinases and cAMP generation.

It localises to the nucleus. The protein resides in the cytoplasm. Its function is as follows. The steroid hormones and their receptors are involved in the regulation of eukaryotic gene expression and affect cellular proliferation and differentiation in target tissues. Transcriptional activator of several progesteron-dependent promoters in a variety of cell types. Involved in activation of SRC-dependent MAPK signaling on hormone stimulation. This Notamacropus eugenii (Tammar wallaby) protein is Progesterone receptor (PGR).